A 271-amino-acid chain; its full sequence is Dermonecrotic toxin LarSicTox-alphaIB1c (271 aa).

The active site involves H3. Mg(2+) is bound by residues E23 and D25. Catalysis depends on H39, which acts as the Nucleophile. 2 disulfides stabilise this stretch: C43–C49 and C45–C188. D83 is a Mg(2+) binding site. N-linked (GlcNAc...) asparagine glycosylation occurs at N248.

Belongs to the arthropod phospholipase D family. Class II subfamily. It depends on Mg(2+) as a cofactor. In terms of tissue distribution, expressed by the venom gland.

It is found in the secreted. The catalysed reaction is an N-(acyl)-sphingosylphosphocholine = an N-(acyl)-sphingosyl-1,3-cyclic phosphate + choline. It catalyses the reaction an N-(acyl)-sphingosylphosphoethanolamine = an N-(acyl)-sphingosyl-1,3-cyclic phosphate + ethanolamine. It carries out the reaction a 1-acyl-sn-glycero-3-phosphocholine = a 1-acyl-sn-glycero-2,3-cyclic phosphate + choline. The enzyme catalyses a 1-acyl-sn-glycero-3-phosphoethanolamine = a 1-acyl-sn-glycero-2,3-cyclic phosphate + ethanolamine. In terms of biological role, dermonecrotic toxins cleave the phosphodiester linkage between the phosphate and headgroup of certain phospholipids (sphingolipid and lysolipid substrates), forming an alcohol (often choline) and a cyclic phosphate. This toxin acts on sphingomyelin (SM). It may also act on ceramide phosphoethanolamine (CPE), lysophosphatidylcholine (LPC) and lysophosphatidylethanolamine (LPE), but not on lysophosphatidylserine (LPS), and lysophosphatidylglycerol (LPG). It acts by transphosphatidylation, releasing exclusively cyclic phosphate products as second products. Induces dermonecrosis, hemolysis, increased vascular permeability, edema, inflammatory response, and platelet aggregation. The sequence is that of Dermonecrotic toxin LarSicTox-alphaIB1c from Loxosceles arizonica (Arizona brown spider).